Reading from the N-terminus, the 138-residue chain is Large-conductance mechanosensitive channel (138 aa).

Helical transmembrane passes span 15 to 35, 38 to 58, and 80 to 100; these read VDLA…NSIV, IIMP…MFIQ, and GNFI…FLVV.

It belongs to the MscL family. Homopentamer.

The protein localises to the cell inner membrane. Functionally, channel that opens in response to stretch forces in the membrane lipid bilayer. May participate in the regulation of osmotic pressure changes within the cell. This chain is Large-conductance mechanosensitive channel, found in Brucella ovis (strain ATCC 25840 / 63/290 / NCTC 10512).